A 199-amino-acid polypeptide reads, in one-letter code: UPF0056 membrane protein bbp_399 (199 aa).

6 helical membrane-spanning segments follow: residues 7–29 (VTIL…SILK), 39–58 (ILIR…LFAG), 71–93 (TVSV…PTYE), 108–130 (FLVP…MLLS), 137–156 (ILYL…VILL), and 176–198 (LMGL…SWFY).

This sequence belongs to the UPF0056 (MarC) family.

It localises to the cell membrane. In Buchnera aphidicola subsp. Baizongia pistaciae (strain Bp), this protein is UPF0056 membrane protein bbp_399.